We begin with the raw amino-acid sequence, 425 residues long: Serine--tRNA ligase (425 aa).

229–231 contributes to the L-serine binding site; the sequence is TAE. 260-262 is a binding site for ATP; the sequence is RSE. Residue Glu-283 coordinates L-serine. 347–350 contacts ATP; it reads EISS. Ser-384 serves as a coordination point for L-serine.

Belongs to the class-II aminoacyl-tRNA synthetase family. Type-1 seryl-tRNA synthetase subfamily. In terms of assembly, homodimer. The tRNA molecule binds across the dimer.

It is found in the cytoplasm. It carries out the reaction tRNA(Ser) + L-serine + ATP = L-seryl-tRNA(Ser) + AMP + diphosphate + H(+). The enzyme catalyses tRNA(Sec) + L-serine + ATP = L-seryl-tRNA(Sec) + AMP + diphosphate + H(+). It functions in the pathway aminoacyl-tRNA biosynthesis; selenocysteinyl-tRNA(Sec) biosynthesis; L-seryl-tRNA(Sec) from L-serine and tRNA(Sec): step 1/1. In terms of biological role, catalyzes the attachment of serine to tRNA(Ser). Is also able to aminoacylate tRNA(Sec) with serine, to form the misacylated tRNA L-seryl-tRNA(Sec), which will be further converted into selenocysteinyl-tRNA(Sec). This chain is Serine--tRNA ligase, found in Rhizorhabdus wittichii (strain DSM 6014 / CCUG 31198 / JCM 15750 / NBRC 105917 / EY 4224 / RW1) (Sphingomonas wittichii).